The following is a 146-amino-acid chain: Anti-sigma F factor (146 aa).

It belongs to the anti-sigma-factor family.

It carries out the reaction L-seryl-[protein] + ATP = O-phospho-L-seryl-[protein] + ADP + H(+). It catalyses the reaction L-threonyl-[protein] + ATP = O-phospho-L-threonyl-[protein] + ADP + H(+). Functionally, binds to sigma F and blocks its ability to form an RNA polymerase holoenzyme (E-sigma F). Phosphorylates SpoIIAA on a serine residue. This phosphorylation may enable SpoIIAA to act as an anti-anti-sigma factor that counteracts SpoIIAB and thus releases sigma F from inhibition. The sequence is that of Anti-sigma F factor from Bacillus cereus (strain ATCC 14579 / DSM 31 / CCUG 7414 / JCM 2152 / NBRC 15305 / NCIMB 9373 / NCTC 2599 / NRRL B-3711).